Consider the following 110-residue polypeptide: Endoribonuclease SymE (110 aa).

A SpoVT-AbrB domain is found at 29 to 74 (SRYPDYTRIPALTMKGQWLEAAGFATGTEVDVRVMNGCIVLTAQQP).

This sequence belongs to the SymE family.

The protein resides in the cytoplasm. Functionally, involved in the degradation and recycling of damaged RNA. It is itself a target for degradation by the ATP-dependent protease Lon. The protein is Endoribonuclease SymE of Salmonella heidelberg (strain SL476).